The primary structure comprises 108 residues: Iron-sulfur cluster assembly protein CyaY (108 aa).

Belongs to the frataxin family.

Involved in iron-sulfur (Fe-S) cluster assembly. May act as a regulator of Fe-S biogenesis. This chain is Iron-sulfur cluster assembly protein CyaY, found in Burkholderia orbicola (strain MC0-3).